Reading from the N-terminus, the 278-residue chain is ATP synthase subunit a (278 aa).

A run of 6 helical transmembrane segments spans residues 41–61 (FLNIDSLFFSFFLGIIFLLFF), 108–128 (LTIFVWLFLMNLMDLIPVDFV), 149–168 (INITLSMSLGVFLLILYFGI), 180–200 (FFFQPFNNYLLIPVNLVLELI), 222–242 (LIFILISGLLPWWLQWILSVP), and 244–264 (AIFHILIIILQAFIFMILTII).

Belongs to the ATPase A chain family. In terms of assembly, F-type ATPases have 2 components, CF(1) - the catalytic core - and CF(0) - the membrane proton channel. CF(1) has five subunits: alpha(3), beta(3), gamma(1), delta(1), epsilon(1). CF(0) has three main subunits: a(1), b(2) and c(9-12). The alpha and beta chains form an alternating ring which encloses part of the gamma chain. CF(1) is attached to CF(0) by a central stalk formed by the gamma and epsilon chains, while a peripheral stalk is formed by the delta and b chains.

It localises to the cell membrane. In terms of biological role, key component of the proton channel; it plays a direct role in the translocation of protons across the membrane. The sequence is that of ATP synthase subunit a from Wigglesworthia glossinidia brevipalpis.